Here is a 113-residue protein sequence, read N- to C-terminus: Ferredoxin-1 (113 aa).

4Fe-4S ferredoxin-type domains lie at 2 to 30 and 31 to 60; these read TYIV…YEGE and NFLV…PDTE. [3Fe-4S] cluster contacts are provided by Cys-9 and Cys-17. The [4Fe-4S] cluster site is built by Cys-21, Cys-40, Cys-43, and Cys-46. Cys-50 serves as a coordination point for [3Fe-4S] cluster.

[4Fe-4S] cluster serves as cofactor. It depends on [3Fe-4S] cluster as a cofactor.

The protein is Ferredoxin-1 (fdxA) of Caulobacter vibrioides (strain ATCC 19089 / CIP 103742 / CB 15) (Caulobacter crescentus).